The primary structure comprises 537 residues: Polyadenylate-binding protein 6 (537 aa).

4 consecutive RRM domains span residues 21 to 99 (GSLY…WSQR), 112 to 188 (ANLY…KFIN), 202 to 279 (TNVY…KALK), and 304 to 381 (SNLY…VAER). The tract at residues 503–537 (KATTSEENRKEERRLTLSGKLSPEVKVEESGKQLQ) is disordered. Composition is skewed to basic and acidic residues over residues 506–517 (TSEENRKEERRL) and 525–537 (PEVK…KQLQ).

It belongs to the polyadenylate-binding protein type-1 family. Expressed at low levels in leaves and young seedlings.

It localises to the cytoplasm. The protein resides in the nucleus. Its function is as follows. Binds the poly(A) tail of mRNA. Appears to be an important mediator of the multiple roles of the poly(A) tail in mRNA biogenesis, stability and translation. The protein is Polyadenylate-binding protein 6 (PAB6) of Arabidopsis thaliana (Mouse-ear cress).